Reading from the N-terminus, the 363-residue chain is Adenosine kinase (363 aa).

Mg(2+) contacts are provided by Ala185, Ile188, and Ala191. Asp318 is a catalytic residue.

It belongs to the carbohydrate kinase PfkB family. It depends on Mg(2+) as a cofactor.

It catalyses the reaction adenosine + ATP = AMP + ADP + H(+). Its pathway is purine metabolism; AMP biosynthesis via salvage pathway; AMP from adenosine: step 1/1. ATP-dependent phosphorylation of adenosine and other related nucleoside analogs to monophosphate derivatives. It is a key purine metabolic enzyme in the opportunistic parasitic protozoan toxoplasma gondii as it cannot synthesize purines de novo. The chain is Adenosine kinase (AK) from Toxoplasma gondii.